The sequence spans 194 residues: Orotate phosphoribosyltransferase (194 aa).

Glu114–Ser122 contributes to the 5-phospho-alpha-D-ribose 1-diphosphate binding site. Orotate contacts are provided by Thr118 and Arg146.

This sequence belongs to the purine/pyrimidine phosphoribosyltransferase family. PyrE subfamily. In terms of assembly, homodimer. Requires Mg(2+) as cofactor.

The enzyme catalyses orotidine 5'-phosphate + diphosphate = orotate + 5-phospho-alpha-D-ribose 1-diphosphate. Its pathway is pyrimidine metabolism; UMP biosynthesis via de novo pathway; UMP from orotate: step 1/2. Functionally, catalyzes the transfer of a ribosyl phosphate group from 5-phosphoribose 1-diphosphate to orotate, leading to the formation of orotidine monophosphate (OMP). This chain is Orotate phosphoribosyltransferase, found in Clostridioides difficile (strain 630) (Peptoclostridium difficile).